We begin with the raw amino-acid sequence, 187 residues long: Ribosome-recycling factor (187 aa).

This sequence belongs to the RRF family.

It is found in the cytoplasm. Functionally, responsible for the release of ribosomes from messenger RNA at the termination of protein biosynthesis. May increase the efficiency of translation by recycling ribosomes from one round of translation to another. The chain is Ribosome-recycling factor from Anaeromyxobacter sp. (strain Fw109-5).